The following is a 658-amino-acid chain: Glycogen debranching enzyme (658 aa).

The active-site Nucleophile is the Asp336. The active-site Proton donor is the Glu371. Residues Glu459 to Gly483 are disordered.

This sequence belongs to the glycosyl hydrolase 13 family.

The catalysed reaction is Hydrolysis of (1-&gt;6)-alpha-D-glucosidic linkages to branches with degrees of polymerization of three or four glucose residues in limit dextrin.. It functions in the pathway glycan degradation; glycogen degradation. Removes maltotriose and maltotetraose chains that are attached by 1,6-alpha-linkage to the limit dextrin main chain, generating a debranched limit dextrin. This Salmonella agona (strain SL483) protein is Glycogen debranching enzyme.